A 236-amino-acid chain; its full sequence is tRNA (guanine-N(1)-)-methyltransferase (236 aa).

S-adenosyl-L-methionine is bound by residues glycine 116 and leucine 136–leucine 141.

Belongs to the RNA methyltransferase TrmD family. In terms of assembly, homodimer.

It is found in the cytoplasm. It carries out the reaction guanosine(37) in tRNA + S-adenosyl-L-methionine = N(1)-methylguanosine(37) in tRNA + S-adenosyl-L-homocysteine + H(+). Its function is as follows. Specifically methylates guanosine-37 in various tRNAs. This chain is tRNA (guanine-N(1)-)-methyltransferase, found in Thiobacillus denitrificans (strain ATCC 25259 / T1).